We begin with the raw amino-acid sequence, 202 residues long: Urease accessory protein UreG (202 aa).

A GTP-binding site is contributed by 11–18 (GPVGSGKT).

Belongs to the SIMIBI class G3E GTPase family. UreG subfamily. Homodimer. UreD, UreF and UreG form a complex that acts as a GTP-hydrolysis-dependent molecular chaperone, activating the urease apoprotein by helping to assemble the nickel containing metallocenter of UreC. The UreE protein probably delivers the nickel.

Its subcellular location is the cytoplasm. Functionally, facilitates the functional incorporation of the urease nickel metallocenter. This process requires GTP hydrolysis, probably effectuated by UreG. The protein is Urease accessory protein UreG of Prochlorococcus marinus (strain MIT 9313).